Reading from the N-terminus, the 432-residue chain is Trigger factor (432 aa).

The PPIase FKBP-type domain maps to 161–246 (EDRVTIDFTG…LKKVEERELP (86 aa)).

This sequence belongs to the FKBP-type PPIase family. Tig subfamily. Homodimer and monomer. In vivo most of the ribosomes are in complex with monomeric TF. Uncomplexed TF, however, is in a monomer-dimer equilibrium with approximately two thirds of TF existing in a dimeric state.

The protein localises to the cytoplasm. The catalysed reaction is [protein]-peptidylproline (omega=180) = [protein]-peptidylproline (omega=0). Functionally, involved in protein export. Acts as a chaperone by maintaining the newly synthesized protein in an open conformation. Functions as a peptidyl-prolyl cis-trans isomerase. This Escherichia coli O6:K15:H31 (strain 536 / UPEC) protein is Trigger factor.